We begin with the raw amino-acid sequence, 349 residues long: Phenylalanine--tRNA ligase alpha subunit (349 aa).

Mg(2+) is bound at residue E259.

This sequence belongs to the class-II aminoacyl-tRNA synthetase family. Phe-tRNA synthetase alpha subunit type 1 subfamily. As to quaternary structure, tetramer of two alpha and two beta subunits. Mg(2+) is required as a cofactor.

It is found in the cytoplasm. The enzyme catalyses tRNA(Phe) + L-phenylalanine + ATP = L-phenylalanyl-tRNA(Phe) + AMP + diphosphate + H(+). In Lactobacillus johnsonii (strain CNCM I-12250 / La1 / NCC 533), this protein is Phenylalanine--tRNA ligase alpha subunit.